Here is a 721-residue protein sequence, read N- to C-terminus: Polyribonucleotide nucleotidyltransferase (721 aa).

Residues D495 and D501 each coordinate Mg(2+). One can recognise a KH domain in the interval 562-621 (PRITTIKIRPERIKDIIGPGGKTIKDITARTGTSINIEDDGSVSIASPNQDKVEEAIKMI). The region spanning 631 to 699 (GRIYMGTVRK…RSGKIRLSRK (69 aa)) is the S1 motif domain. Residues 699–721 (KEALADSAKKSEGTEPPKGEPAK) are disordered.

The protein belongs to the polyribonucleotide nucleotidyltransferase family. Mg(2+) serves as cofactor.

Its subcellular location is the cytoplasm. The catalysed reaction is RNA(n+1) + phosphate = RNA(n) + a ribonucleoside 5'-diphosphate. Its function is as follows. Involved in mRNA degradation. Catalyzes the phosphorolysis of single-stranded polyribonucleotides processively in the 3'- to 5'-direction. This chain is Polyribonucleotide nucleotidyltransferase, found in Anaeromyxobacter dehalogenans (strain 2CP-C).